Here is a 203-residue protein sequence, read N- to C-terminus: Ribosomal RNA large subunit methyltransferase E (203 aa).

Residues glycine 59, tryptophan 61, aspartate 79, asparagine 95, and aspartate 118 each coordinate S-adenosyl-L-methionine. The Proton acceptor role is filled by lysine 158.

The protein belongs to the class I-like SAM-binding methyltransferase superfamily. RNA methyltransferase RlmE family.

The protein localises to the cytoplasm. The enzyme catalyses uridine(2552) in 23S rRNA + S-adenosyl-L-methionine = 2'-O-methyluridine(2552) in 23S rRNA + S-adenosyl-L-homocysteine + H(+). Its function is as follows. Specifically methylates the uridine in position 2552 of 23S rRNA at the 2'-O position of the ribose in the fully assembled 50S ribosomal subunit. The sequence is that of Ribosomal RNA large subunit methyltransferase E from Wigglesworthia glossinidia brevipalpis.